Reading from the N-terminus, the 193-residue chain is Cbp/p300-interacting transactivator 1 (193 aa).

3 disordered regions span residues 1-26 (MPTTSRPALDVKGGTSPAKEDANQEM), 50-88 (VASNGTKASGAPTSSSGSPIGSPTTTPPTKPPSFNLHPA), and 106-147 (GMAA…SPAI). Low complexity predominate over residues 54–73 (GTKASGAPTSSSGSPIGSPT). The Nuclear export signal signature appears at 158-167 (LMSLVVELGL).

Belongs to the CITED family. In terms of assembly, interacts (via C-terminus) with CREBBP. Interacts with EGR2. Homodimer. Binds to RBM14. Interacts (via N-terminus) with HSPA8; the interaction suppresses the association of CITED1 with p300/CBP and SMAD-mediated transcription transactivation. Interacts (via C-terminus) with TOX3 (via HGM box); the interaction increases estrogen-response element (ERE)-dependent transcription and protection against cell death. Interacts with ESR1; the interaction occurs in a estrogen-dependent manner. Interacts (unphosphorylated form preferentially and via C-terminus) with EP300. Post-translationally, phosphorylated. Phosphorylation changes in a cell cycle-dependent manner and reduces its transcriptional coactivator activity. Expressed only in melanocytes and testis.

It is found in the nucleus. The protein resides in the cytoplasm. Transcriptional coactivator of the p300/CBP-mediated transcription complex. Enhances SMAD-mediated transcription by strengthening the functional link between the DNA-binding SMAD transcription factors and the p300/CBP transcription coactivator complex. Stimulates estrogen-dependent transactivation activity mediated by estrogen receptors signaling; stabilizes the interaction of estrogen receptor ESR1 and histone acetyltransferase EP300. Positively regulates TGF-beta signaling through its association with the SMAD/p300/CBP-mediated transcriptional coactivator complex. Induces transcription from estrogen-responsive promoters and protection against cell death. Potentiates EGR2-mediated transcriptional activation activity from the ERBB2 promoter. Acts as an inhibitor of osteoblastic mineralization through a cAMP-dependent parathyroid hormone receptor signaling. May play a role in pigmentation of melanocytes. Associates with chromatin to the estrogen-responsive TGF-alpha promoter region in a estrogen-dependent manner. This chain is Cbp/p300-interacting transactivator 1 (CITED1), found in Homo sapiens (Human).